A 78-amino-acid polypeptide reads, in one-letter code: Large ribosomal subunit protein bL28 (78 aa).

The tract at residues Met1–Ala24 is disordered.

Belongs to the bacterial ribosomal protein bL28 family.

This chain is Large ribosomal subunit protein bL28, found in Aeromonas salmonicida (strain A449).